Consider the following 355-residue polypeptide: Guanine nucleotide-binding protein G(i) subunit alpha-2 (355 aa).

A lipid anchor (N-myristoyl glycine) is attached at glycine 2. Residue cysteine 3 is the site of S-palmitoyl cysteine attachment. In terms of domain architecture, G-alpha spans 32-355 (REVKLLLLGA…KNNLKDCGLF (324 aa)). The G1 motif stretch occupies residues 35 to 48 (KLLLLGAGESGKST). GTP contacts are provided by residues 40–47 (GAGESGKS), 176–182 (LRTRVKT), 201–205 (DVGGQ), 270–273 (NKKD), and alanine 327. Residues serine 47 and threonine 182 each contribute to the Mg(2+) site. The interval 174–182 (DVLRTRVKT) is G2 motif. The tract at residues 197–206 (FKMFDVGGQR) is G3 motif. Positions 266–273 (ILFLNKKD) are G4 motif. The segment at 325-330 (TCATDT) is G5 motif.

This sequence belongs to the G-alpha family. G(i/o/t/z) subfamily. As to quaternary structure, g proteins are composed of 3 units; alpha, beta and gamma. The alpha chain contains the guanine nucleotide binding site. In this context, interacts with GNB2. Interacts with UNC5B. Interacts with GPSM1. Interacts with RGS12 and RGS14. Interacts (inactive GDP-bound form) with NUCB1 (via GBA motif); the interaction leads to activation of GNAI3. Interacts (inactive GDP-bound form) with CCDC88C/DAPLE (via GBA motif). Interacts (inactive GDP-bound form) with CCDC8A/GIV (via GBA motif).

The protein resides in the cytoplasm. It localises to the cell membrane. The protein localises to the cytoskeleton. Its subcellular location is the microtubule organizing center. It is found in the centrosome. The protein resides in the membrane. In terms of biological role, guanine nucleotide-binding proteins (G proteins) are involved as modulators or transducers in various transmembrane signaling systems. The G(i) proteins are involved in hormonal regulation of adenylate cyclase: they inhibit the cyclase in response to beta-adrenergic stimuli. May play a role in cell division. This is Guanine nucleotide-binding protein G(i) subunit alpha-2 (Gnai2) from Rattus norvegicus (Rat).